The sequence spans 275 residues: Formamidopyrimidine-DNA glycosylase (275 aa).

The Schiff-base intermediate with DNA role is filled by P2. The active-site Proton donor is E3. The active-site Proton donor; for beta-elimination activity is K58. H89, R108, and K151 together coordinate DNA. The segment at K236 to K275 adopts an FPG-type; degenerate zinc-finger fold. Residue R265 is the Proton donor; for delta-elimination activity of the active site.

It belongs to the FPG family. Monomer. It depends on Zn(2+) as a cofactor.

It catalyses the reaction Hydrolysis of DNA containing ring-opened 7-methylguanine residues, releasing 2,6-diamino-4-hydroxy-5-(N-methyl)formamidopyrimidine.. It carries out the reaction 2'-deoxyribonucleotide-(2'-deoxyribose 5'-phosphate)-2'-deoxyribonucleotide-DNA = a 3'-end 2'-deoxyribonucleotide-(2,3-dehydro-2,3-deoxyribose 5'-phosphate)-DNA + a 5'-end 5'-phospho-2'-deoxyribonucleoside-DNA + H(+). Its function is as follows. Involved in base excision repair of DNA damaged by oxidation or by mutagenic agents. Acts as a DNA glycosylase that recognizes and removes damaged bases. Has a preference for oxidized purines, such as 7,8-dihydro-8-oxoguanine (8-oxoG). Has AP (apurinic/apyrimidinic) lyase activity and introduces nicks in the DNA strand. Cleaves the DNA backbone by beta-delta elimination to generate a single-strand break at the site of the removed base with both 3'- and 5'-phosphates. The polypeptide is Formamidopyrimidine-DNA glycosylase (Acidiphilium cryptum (strain JF-5)).